The chain runs to 274 residues: Diaminopimelate epimerase (274 aa).

Positions 13, 45, and 63 each coordinate substrate. Cysteine 72 serves as the catalytic Proton donor. Residues 73-74, asparagine 158, asparagine 191, and 209-210 each bind substrate; these read GN and ER. Cysteine 218 (proton acceptor) is an active-site residue. Substrate is bound at residue 219 to 220; sequence GT.

Belongs to the diaminopimelate epimerase family. In terms of assembly, homodimer.

The protein resides in the cytoplasm. It catalyses the reaction (2S,6S)-2,6-diaminopimelate = meso-2,6-diaminopimelate. It functions in the pathway amino-acid biosynthesis; L-lysine biosynthesis via DAP pathway; DL-2,6-diaminopimelate from LL-2,6-diaminopimelate: step 1/1. In terms of biological role, catalyzes the stereoinversion of LL-2,6-diaminopimelate (L,L-DAP) to meso-diaminopimelate (meso-DAP), a precursor of L-lysine and an essential component of the bacterial peptidoglycan. In Pelagibacter ubique (strain HTCC1062), this protein is Diaminopimelate epimerase.